Reading from the N-terminus, the 287-residue chain is uncharacterized protein (287 aa).

Residues 1-20 form the signal peptide; the sequence is MKVICGSVFLFSLFFQVVLG. Topologically, residues 22–201 are extracellular; the sequence is YFSSSSGNPN…AFYGPRRNIK (180 aa). 3 N-linked (GlcNAc...) asparagine glycosylation sites follow: asparagine 120, asparagine 154, and asparagine 166. Residues 202–222 traverse the membrane as a helical segment; that stretch reads AAIAVPSVILGLILVALVYYA. Topologically, residues 223–287 are cytoplasmic; it reads YRKDTWKIYM…YYQSQVKKFH (65 aa).

It is found in the membrane. This is an uncharacterized protein from Schizosaccharomyces pombe (strain 972 / ATCC 24843) (Fission yeast).